We begin with the raw amino-acid sequence, 824 residues long: Probable receptor-like protein kinase At5g24010 (824 aa).

An N-terminal signal peptide occupies residues Met-1–Ala-24. Residues Asn-6, Asn-41, Asn-204, Asn-227, and Asn-291 are each glycosylated (N-linked (GlcNAc...) asparagine). The Extracellular portion of the chain corresponds to Ala-25–Asn-406. Residues Val-407–Leu-427 traverse the membrane as a helical segment. The Cytoplasmic portion of the chain corresponds to Ser-428–Arg-824. Residues Thr-440–Val-467 form a disordered region. Residues Gly-456–Val-467 show a composition bias toward polar residues. The Protein kinase domain maps to Phe-489–Gln-764. ATP is bound by residues Ile-495–Val-503 and Lys-517. Asp-613 serves as the catalytic Proton acceptor. Positions Asp-777–Asp-803 are disordered.

The protein belongs to the protein kinase superfamily. Ser/Thr protein kinase family.

Its subcellular location is the membrane. The protein is Probable receptor-like protein kinase At5g24010 of Arabidopsis thaliana (Mouse-ear cress).